Consider the following 145-residue polypeptide: D-aminoacyl-tRNA deacylase (145 aa).

The Gly-cisPro motif, important for rejection of L-amino acids signature appears at 137-138; the sequence is GP.

The protein belongs to the DTD family. Homodimer.

It localises to the cytoplasm. The enzyme catalyses glycyl-tRNA(Ala) + H2O = tRNA(Ala) + glycine + H(+). It carries out the reaction a D-aminoacyl-tRNA + H2O = a tRNA + a D-alpha-amino acid + H(+). In terms of biological role, an aminoacyl-tRNA editing enzyme that deacylates mischarged D-aminoacyl-tRNAs. Also deacylates mischarged glycyl-tRNA(Ala), protecting cells against glycine mischarging by AlaRS. Acts via tRNA-based rather than protein-based catalysis; rejects L-amino acids rather than detecting D-amino acids in the active site. By recycling D-aminoacyl-tRNA to D-amino acids and free tRNA molecules, this enzyme counteracts the toxicity associated with the formation of D-aminoacyl-tRNA entities in vivo and helps enforce protein L-homochirality. This Pelobacter propionicus (strain DSM 2379 / NBRC 103807 / OttBd1) protein is D-aminoacyl-tRNA deacylase.